The primary structure comprises 98 residues: U1-theraphotoxin-Ap1a (98 aa).

The N-terminal stretch at 1 to 23 (MRSLTLAAVLACSLLLVFHTSAA) is a signal peptide. Positions 24 to 50 (EELEVQDGHLMNPGDGDTALATVDDER) are excised as a propeptide. 3 cysteine pairs are disulfide-bonded: C54–C84, C58–C90, and C72–C95. Residues 63-84 (DGKSKEGKPCKPKGDKNKDKKC) form a disordered region.

The protein belongs to the neurotoxin 12 (Hwtx-2) family. 01 (Ap1a) subfamily. In terms of tissue distribution, expressed by the venom gland.

It is found in the secreted. Functionally, is toxic to both insects and mammals. Induces reversible paralysis when injected into S.frugiperda larvae. Reduces both the amplitude and frequency of responses from muscle (GF-TTM and GF-DLM) pathways in the D.melanogaster giant fiber circuit, suggesting an action at the neuromuscular junction, which is mediated by glutamatergic receptors. In mice, intracranial injection of 30 ug causes increased urination, myoclonus, hypermotility with circular movements followed by respiratory and generalized seizures resulting in death within 25-35 minutes of injection. The sequence is that of U1-theraphotoxin-Ap1a from Acanthoscurria paulensis (Brazilian giant black tarantula spider).